A 62-amino-acid chain; its full sequence is Translational regulator CsrA (62 aa).

This sequence belongs to the CsrA/RsmA family. Homodimer; the beta-strands of each monomer intercalate to form a hydrophobic core, while the alpha-helices form wings that extend away from the core.

The protein resides in the cytoplasm. In terms of biological role, a key translational regulator that binds mRNA to regulate translation initiation and/or mRNA stability. Mediates global changes in gene expression, shifting from rapid growth to stress survival by linking envelope stress, the stringent response and the catabolite repression systems. Usually binds in the 5'-UTR; binding at or near the Shine-Dalgarno sequence prevents ribosome-binding, repressing translation, binding elsewhere in the 5'-UTR can activate translation and/or stabilize the mRNA. Its function is antagonized by small RNA(s). This Haemophilus ducreyi (strain 35000HP / ATCC 700724) protein is Translational regulator CsrA.